A 414-amino-acid chain; its full sequence is BICD family-like cargo adapter 2 (414 aa).

A coiled-coil region spans residues 34–341 (GQALLEKNEE…DALNQQLLNT (308 aa)). Basic and acidic residues predominate over residues 372 to 384 (QEKEKENNKERTG). Positions 372-399 (QEKEKENNKERTGFQRGTRTTKSLRLRG) are disordered.

This Danio rerio (Zebrafish) protein is BICD family-like cargo adapter 2 (bicdl2).